A 410-amino-acid polypeptide reads, in one-letter code: Tryptophan synthase beta chain (410 aa).

Lys98 bears the N6-(pyridoxal phosphate)lysine mark.

It belongs to the TrpB family. Tetramer of two alpha and two beta chains. Pyridoxal 5'-phosphate is required as a cofactor.

It catalyses the reaction (1S,2R)-1-C-(indol-3-yl)glycerol 3-phosphate + L-serine = D-glyceraldehyde 3-phosphate + L-tryptophan + H2O. It participates in amino-acid biosynthesis; L-tryptophan biosynthesis; L-tryptophan from chorismate: step 5/5. Its function is as follows. The beta subunit is responsible for the synthesis of L-tryptophan from indole and L-serine. The chain is Tryptophan synthase beta chain from Roseobacter denitrificans (strain ATCC 33942 / OCh 114) (Erythrobacter sp. (strain OCh 114)).